The sequence spans 107 residues: Large ribosomal subunit protein uL24 (107 aa).

It belongs to the universal ribosomal protein uL24 family. As to quaternary structure, part of the 50S ribosomal subunit.

In terms of biological role, one of two assembly initiator proteins, it binds directly to the 5'-end of the 23S rRNA, where it nucleates assembly of the 50S subunit. Functionally, one of the proteins that surrounds the polypeptide exit tunnel on the outside of the subunit. The polypeptide is Large ribosomal subunit protein uL24 (Streptomyces coelicolor (strain ATCC BAA-471 / A3(2) / M145)).